Consider the following 431-residue polypeptide: MTKSSELYQKAQQTIPGGVNSPVRAFNGVGGSPLFIERADGALIFDADGRAYIDYVGSWGPMILGHNHAVIREAVIDAAQRGLSFGAPTEMEIAMAELVSELVPSMEQIRMVSSGTEATMSAIRLARGFTGRDKIMKFEGCYHGHADSLLVKAGSGALTLGQPSSPGVPADFAKHTLTATFNDLDSVRELFAANKGEIACIIVEPVAGNMNCIPPVEGFHEGLREICDQEGALLIFDEVMTGFRVALGGAQAHYNIKPDLTTLGKVIGGGMPVGAFGGRKEVMQYVAPTGPVYQAGTLSGNPVAMAAGFACLNLLKEEGNEKRLASKTKQLADGFKSLAEKHGIPLVVNQVGGMFGFFFTDQETVTCYEDVTKCDIERFKRFFHLMLDHGVYLAPSAFEASFTSLAHGSKEIDATLEAADRCFAIIAAEAK.

Residue Lys265 is modified to N6-(pyridoxal phosphate)lysine.

Belongs to the class-III pyridoxal-phosphate-dependent aminotransferase family. HemL subfamily. As to quaternary structure, homodimer. Pyridoxal 5'-phosphate is required as a cofactor.

Its subcellular location is the cytoplasm. The catalysed reaction is (S)-4-amino-5-oxopentanoate = 5-aminolevulinate. It functions in the pathway porphyrin-containing compound metabolism; protoporphyrin-IX biosynthesis; 5-aminolevulinate from L-glutamyl-tRNA(Glu): step 2/2. In Vibrio parahaemolyticus serotype O3:K6 (strain RIMD 2210633), this protein is Glutamate-1-semialdehyde 2,1-aminomutase.